Here is a 300-residue protein sequence, read N- to C-terminus: Geranylgeranyl diphosphate synthase (300 aa).

Isopentenyl diphosphate is bound by residues lysine 50, arginine 53, and histidine 82. Positions 89 and 95 each coordinate Mg(2+). Arginine 100 lines the (2E,6E)-farnesyl diphosphate pocket. An isopentenyl diphosphate-binding site is contributed by arginine 101. (2E,6E)-farnesyl diphosphate contacts are provided by lysine 186, threonine 187, and glutamine 224.

It belongs to the FPP/GGPP synthase family. Mg(2+) is required as a cofactor.

It localises to the plastid. The protein resides in the cyanelle. It carries out the reaction isopentenyl diphosphate + (2E,6E)-farnesyl diphosphate = (2E,6E,10E)-geranylgeranyl diphosphate + diphosphate. It functions in the pathway isoprenoid biosynthesis; geranylgeranyl diphosphate biosynthesis; geranylgeranyl diphosphate from farnesyl diphosphate and isopentenyl diphosphate: step 1/1. Catalyzes the condensation of farnesyl diphosphate (FPP) and isopentenyl diphosphate (IPP) to yield geranylgeranyl diphosphate (GGPP) needed for biosynthesis of carotenoids and diterpenes. The polypeptide is Geranylgeranyl diphosphate synthase (crtE) (Cyanophora paradoxa).